The sequence spans 864 residues: Putative Gly-rich membrane protein Bcell_0380 (864 aa).

Residues 7–27 form a helical membrane-spanning segment; it reads ITFLAAFICIIFVIYAIYHSV. The segment at 372–399 is disordered; it reads TVENSFYDEDTTGQSDTGKGTPMSTADM. Positions 383-395 are enriched in polar residues; that stretch reads TGQSDTGKGTPMS.

Its subcellular location is the cell membrane. This is Putative Gly-rich membrane protein Bcell_0380 from Evansella cellulosilytica (strain ATCC 21833 / DSM 2522 / FERM P-1141 / JCM 9156 / N-4) (Bacillus cellulosilyticus).